The chain runs to 203 residues: MRGKFITFEGIDGAGKSTHIDWVADRLRARSDIAGVVTTREPGGTSLGEDLRQILLHRKMHLETEALLMFAARREHIAEVIAPALERGKWVISDRFTDATFAYQGGGRGLATERLEVLEDWVQGGLQPDLTLLFDVPLETASERLAGARAPDRFESESRAFFQRTRDEYLRRAAQSPQRFRVIDATRSIADIRDELEKIIATI.

An ATP-binding site is contributed by 10-17 (GIDGAGKS).

It belongs to the thymidylate kinase family.

It carries out the reaction dTMP + ATP = dTDP + ADP. Phosphorylation of dTMP to form dTDP in both de novo and salvage pathways of dTTP synthesis. The sequence is that of Thymidylate kinase from Cupriavidus necator (strain ATCC 17699 / DSM 428 / KCTC 22496 / NCIMB 10442 / H16 / Stanier 337) (Ralstonia eutropha).